Reading from the N-terminus, the 134-residue chain is MNYFAVALGGFFGAIAREITGRALGTSIFPVGTLAINLSGSFLLLFFMTLFLERINVSDPVRLGLTSGFLGAYTTFSTMTKEIYLLLFQSKLLIGFAYLFLSLSGGFLSGILGRALALYLVNLNFRKNGAKDEG.

The next 4 helical transmembrane spans lie at 1 to 21, 28 to 48, 68 to 88, and 92 to 112; these read MNYF…EITG, IFPV…LFFM, GFLG…LLLF, and LLIG…SGIL. Residues Gly71 and Thr74 each contribute to the Na(+) site.

Belongs to the fluoride channel Fluc/FEX (TC 1.A.43) family.

It is found in the cell membrane. It carries out the reaction fluoride(in) = fluoride(out). Its activity is regulated as follows. Na(+) is not transported, but it plays an essential structural role and its presence is essential for fluoride channel function. Fluoride-specific ion channel. Important for reducing fluoride concentration in the cell, thus reducing its toxicity. The sequence is that of Fluoride-specific ion channel FluC 2 from Carboxydothermus hydrogenoformans (strain ATCC BAA-161 / DSM 6008 / Z-2901).